The primary structure comprises 366 residues: Probable protein arginine N-methyltransferase 1.2 (366 aa).

The SAM-dependent MTase PRMT-type domain maps to 45-347 (ADYYFDSYSH…NPRDVDIKLS (303 aa)). Residues glutamate 157 and glutamate 166 contribute to the active site.

This sequence belongs to the class I-like SAM-binding methyltransferase superfamily. Protein arginine N-methyltransferase family. In terms of assembly, interacts with FIB2 and PRMT11.

Its subcellular location is the nucleus. The protein localises to the cytoplasm. Methylates (mono and asymmetric dimethylation) the guanidino nitrogens of arginyl residues present in a glycine and arginine-rich domain. Type I arginine methyltransferase active on both histones and non-histone proteins. Mediates the methylation of MED36A. This chain is Probable protein arginine N-methyltransferase 1.2 (PRMT12), found in Arabidopsis thaliana (Mouse-ear cress).